The primary structure comprises 1030 residues: Halotolerance protein 9 (1030 aa).

The zn(2)-C6 fungal-type DNA-binding region spans 136–166 (CDHCRKRKIRCDEVDQQTKKCSNCIKFQLPC). Residues 185 to 208 (HHATPGESLQTSNSISNPVASSSV) are disordered. A compositionally biased stretch (low complexity) spans 196–208 (SNSISNPVASSSV). Phosphoserine occurs at positions 221 and 937.

It localises to the cytoplasm. The protein localises to the nucleus. Functionally, putative transcription factor involved in halotolerance. The chain is Halotolerance protein 9 (HAL9) from Saccharomyces cerevisiae (strain ATCC 204508 / S288c) (Baker's yeast).